A 637-amino-acid polypeptide reads, in one-letter code: Transcription factor PHYTOCHROME INTERACTING FACTOR-LIKE 15 (637 aa).

The span at 35-46 shows a compositional bias: gly residues; that stretch reads FFGGTGGGGGGS. Disordered regions lie at residues 35 to 54, 146 to 213, and 356 to 397; these read FFGGTGGGGGGSSSRAQERQ, ASLP…EGVM, and ECSA…RRRR. Residues 149-170 show a composition bias toward polar residues; it reads PASNHNGATNNRNAPVATTTTR. Residues 384 to 397 form a basic motif region; sequence RTAEVHNLSERRRR. A compositionally biased stretch (basic and acidic residues) spans 384 to 397; it reads RTAEVHNLSERRRR. Residues 384–433 enclose the bHLH domain; the sequence is RTAEVHNLSERRRRDRINEKMRALQELIPNCNKIDKASMLDEAIEYLKTL. A helix-loop-helix motif region spans residues 398–433; that stretch reads DRINEKMRALQELIPNCNKIDKASMLDEAIEYLKTL. The segment at 601 to 637 is disordered; the sequence is GDNENFRIPSSAQTKSSQFSDGTGKGTNARERDGAET. A compositionally biased stretch (polar residues) spans 608–621; that stretch reads IPSSAQTKSSQFSD. Residues 628-637 are compositionally biased toward basic and acidic residues; it reads NARERDGAET.

Belongs to the bHLH protein family. As to quaternary structure, interacts with LF and PRR1.

It is found in the nucleus. Transcription factor that may act as negative regulator of phyB-dependent light signal transduction. The polypeptide is Transcription factor PHYTOCHROME INTERACTING FACTOR-LIKE 15 (Oryza sativa subsp. japonica (Rice)).